The following is a 403-amino-acid chain: Beta-galactoside alpha-2,6-sialyltransferase 1 (403 aa).

Topologically, residues 1–9 are cytoplasmic; it reads MIHTNLKRK. Residues 10–26 form a helical; Signal-anchor for type II membrane protein membrane-spanning segment; it reads FSCFVLVFLLFAIICVW. The Lumenal segment spans residues 27–403; sequence KKGSDYEALT…TLSGFRNNRC (377 aa). Disulfide bonds link cysteine 139–cysteine 403, cysteine 181–cysteine 332, and cysteine 350–cysteine 361. Asparagine 146 and asparagine 158 each carry an N-linked (GlcNAc...) asparagine glycan. Substrate-binding positions include serine 186, asparagine 209, asparagine 230, 319-321, cysteine 350, tyrosine 351, threonine 362, tyrosine 366, histidine 367, and lysine 373; that span reads SSG. Tyrosine 366 carries the post-translational modification Phosphotyrosine.

It belongs to the glycosyltransferase 29 family. As to quaternary structure, monomer and homodimer. N-glycosylated.

Its subcellular location is the golgi apparatus. The protein resides in the golgi stack membrane. It localises to the secreted. The enzyme catalyses a beta-D-galactoside + CMP-N-acetyl-beta-neuraminate = an N-acetyl-alpha-neuraminyl-(2-&gt;6)-beta-D-galactosyl derivative + CMP + H(+). The protein operates within protein modification; protein glycosylation. Its function is as follows. Transfers sialic acid from CMP-sialic acid to galactose-containing acceptor substrates. This chain is Beta-galactoside alpha-2,6-sialyltransferase 1 (St6gal1), found in Mus musculus (Mouse).